The primary structure comprises 426 residues: Probable indole-3-pyruvate monooxygenase YUCCA8 (426 aa).

Position 29 to 34 (29 to 34) interacts with FAD; the sequence is GAGPSG. Residue 199–204 coordinates NADP(+); sequence GCGNSG.

This sequence belongs to the FMO family. Requires FAD as cofactor. As to expression, expressed in root tips and in hydathodes. Expressed in root vasculature and quiescent center, but not in the meristematic zone of the root tip.

It catalyses the reaction indole-3-pyruvate + NADPH + O2 + H(+) = (indol-3-yl)acetate + CO2 + NADP(+) + H2O. It functions in the pathway plant hormone metabolism; auxin biosynthesis. In terms of biological role, involved in auxin biosynthesis. Belongs to the set of redundant YUCCA genes probably responsible for auxin biosynthesis in roots. The polypeptide is Probable indole-3-pyruvate monooxygenase YUCCA8 (YUC8) (Arabidopsis thaliana (Mouse-ear cress)).